The chain runs to 91 residues: Islet amyloid polypeptide (91 aa).

The first 22 residues, 1–22 (MGILKLPVVLIVLCVALNHLEG), serve as a signal peptide directing secretion. Positions 23–33 (GGKPTESHQME) are excised as a propeptide. C37 and C42 are joined by a disulfide. A Tyrosine amide modification is found at Y72. Positions 78-91 (VEILKREPLSYLPI) are excised as a propeptide.

Belongs to the calcitonin family. As to quaternary structure, can form homodimers. Interacts with IDE and INS. Interaction with INS inhibits homodimerization and fibril formation.

Its subcellular location is the secreted. Functionally, amylin/IAPP is a glucoregulatory peptide hormone that plays an important role in the regulation of energy homeostasis. Selectively inhibits insulin-stimulated glucose utilization and glycogen deposition in muscle, while not affecting adipocyte glucose metabolism. IAPP function is mediated by the CALCR-RAMPs (AMYRs) receptor complexes. Amylin can also bind CALCR receptor in the absence of RAMPs, although it is more selective for AMYRs. This chain is Islet amyloid polypeptide (IAPP), found in Bos taurus (Bovine).